The sequence spans 351 residues: Photosystem II D2 protein (351 aa).

Residues 39-59 (TSYLSIGGWFTGTTFVTSWYT) traverse the membrane as a helical segment. Chlorophyll a is bound at residue His116. A helical transmembrane segment spans residues 123-139 (GFCLRQFEIARLVGIRP). Residues Gln128 and Asn141 each contribute to the pheophytin a site. Residues 151–164 (IFVSVFLMYPLGQA) form a helical membrane-spanning segment. His196 lines the chlorophyll a pocket. The chain crosses the membrane as a helical span at residues 206–226 (AALLCAIHGATVQNTIFEDGD). Positions 213 and 260 each coordinate a plastoquinone. His213 serves as a coordination point for Fe cation. His267 lines the Fe cation pocket. A helical membrane pass occupies residues 277 to 293 (GLWTSAIGIVGLALNLR).

The protein belongs to the reaction center PufL/M/PsbA/D family. In terms of assembly, PSII is composed of 1 copy each of membrane proteins PsbA, PsbB, PsbC, PsbD, PsbE, PsbF, PsbH, PsbI, PsbJ, PsbK, PsbL, PsbM, PsbT, PsbX, PsbY, PsbZ, Psb30/Ycf12, at least 3 peripheral proteins of the oxygen-evolving complex and a large number of cofactors. It forms dimeric complexes. The cofactor is The D1/D2 heterodimer binds P680, chlorophylls that are the primary electron donor of PSII, and subsequent electron acceptors. It shares a non-heme iron and each subunit binds pheophytin, quinone, additional chlorophylls, carotenoids and lipids. There is also a Cl(-1) ion associated with D1 and D2, which is required for oxygen evolution. The PSII complex binds additional chlorophylls, carotenoids and specific lipids..

The protein resides in the plastid. Its subcellular location is the chloroplast thylakoid membrane. The catalysed reaction is 2 a plastoquinone + 4 hnu + 2 H2O = 2 a plastoquinol + O2. Functionally, photosystem II (PSII) is a light-driven water:plastoquinone oxidoreductase that uses light energy to abstract electrons from H(2)O, generating O(2) and a proton gradient subsequently used for ATP formation. It consists of a core antenna complex that captures photons, and an electron transfer chain that converts photonic excitation into a charge separation. The D1/D2 (PsbA/PsbD) reaction center heterodimer binds P680, the primary electron donor of PSII as well as several subsequent electron acceptors. D2 is needed for assembly of a stable PSII complex. The polypeptide is Photosystem II D2 protein (Guillardia theta (Cryptophyte)).